We begin with the raw amino-acid sequence, 421 residues long: Medium-chain specific acyl-CoA dehydrogenase, mitochondrial (421 aa).

The transit peptide at 1-25 (MAAAFGRCCRVLRSISRFHWRSQHT) directs the protein to the mitochondrion. K69 bears the N6-acetyllysine; alternate mark. K69 is subject to N6-succinyllysine; alternate. An FAD-binding site is contributed by 158–167 (YCVTEPGAGS). S167 is a binding site for octanoyl-CoA. K179 is modified (N6-succinyllysine). Residue 191 to 193 (WIT) coordinates FAD. 4 positions are modified to N6-acetyllysine; alternate: K212, K217, K259, and K271. N6-succinyllysine; alternate occurs at positions 212, 217, 259, and 271. D278 contributes to the octanoyl-CoA binding site. The residue at position 279 (K279) is an N6-acetyllysine. R281 contacts octanoyl-CoA. K301 carries the post-translational modification N6-acetyllysine. Residues 306-308 (RKT) and 316-317 (HQ) each bind FAD. R349 and T351 together coordinate octanoyl-CoA. T351 carries the post-translational modification Phosphothreonine. Residue 374–378 (QIFGG) participates in FAD binding. E401 contacts octanoyl-CoA. The active-site Proton acceptor is the E401. 402–405 (GTSQ) provides a ligand contact to FAD.

This sequence belongs to the acyl-CoA dehydrogenase family. As to quaternary structure, homotetramer. Interacts with the heterodimeric electron transfer flavoprotein ETF. Requires FAD as cofactor. Acetylated. Could occur at proximity of the cofactor-binding sites and reduce the catalytic activity. Could be deacetylated by SIRT3.

It is found in the mitochondrion matrix. It carries out the reaction a medium-chain 2,3-saturated fatty acyl-CoA + oxidized [electron-transfer flavoprotein] + H(+) = a medium-chain (2E)-enoyl-CoA + reduced [electron-transfer flavoprotein]. It catalyses the reaction pentanoyl-CoA + oxidized [electron-transfer flavoprotein] + H(+) = (2E)-pentenoyl-CoA + reduced [electron-transfer flavoprotein]. The catalysed reaction is hexanoyl-CoA + oxidized [electron-transfer flavoprotein] + H(+) = (2E)-hexenoyl-CoA + reduced [electron-transfer flavoprotein]. The enzyme catalyses octanoyl-CoA + oxidized [electron-transfer flavoprotein] + H(+) = (2E)-octenoyl-CoA + reduced [electron-transfer flavoprotein]. It carries out the reaction decanoyl-CoA + oxidized [electron-transfer flavoprotein] + H(+) = (2E)-decenoyl-CoA + reduced [electron-transfer flavoprotein]. It catalyses the reaction dodecanoyl-CoA + oxidized [electron-transfer flavoprotein] + H(+) = (2E)-dodecenoyl-CoA + reduced [electron-transfer flavoprotein]. The catalysed reaction is tetradecanoyl-CoA + oxidized [electron-transfer flavoprotein] + H(+) = (2E)-tetradecenoyl-CoA + reduced [electron-transfer flavoprotein]. The enzyme catalyses oxidized [electron-transfer flavoprotein] + hexadecanoyl-CoA + H(+) = (2E)-hexadecenoyl-CoA + reduced [electron-transfer flavoprotein]. It functions in the pathway lipid metabolism; mitochondrial fatty acid beta-oxidation. Functionally, medium-chain specific acyl-CoA dehydrogenase is one of the acyl-CoA dehydrogenases that catalyze the first step of mitochondrial fatty acid beta-oxidation, an aerobic process breaking down fatty acids into acetyl-CoA and allowing the production of energy from fats. The first step of fatty acid beta-oxidation consists in the removal of one hydrogen from C-2 and C-3 of the straight-chain fatty acyl-CoA thioester, resulting in the formation of trans-2-enoyl-CoA. Electron transfer flavoprotein (ETF) is the electron acceptor that transfers electrons to the main mitochondrial respiratory chain via ETF-ubiquinone oxidoreductase (ETF dehydrogenase). Among the different mitochondrial acyl-CoA dehydrogenases, medium-chain specific acyl-CoA dehydrogenase acts specifically on acyl-CoAs with saturated 6 to 12 carbons long primary chains. In Macaca fascicularis (Crab-eating macaque), this protein is Medium-chain specific acyl-CoA dehydrogenase, mitochondrial.